The chain runs to 147 residues: UPF0306 protein YpAngola_A4021 (147 aa).

It belongs to the UPF0306 family.

This Yersinia pestis bv. Antiqua (strain Angola) protein is UPF0306 protein YpAngola_A4021.